We begin with the raw amino-acid sequence, 200 residues long: MLAFCRSSLKSKKYFIILLALAAIAGLGTHAAWSSNGLPRIDNKTLARLAQQHPVVVLFRHAERCDRSTNQCLSDKTGITVKGTQDARELGNAFSADIPDFDLYSSNTVRTIQSATWFSAGKKLTVDKRLLQCGNEIYSAIKDLQSKAPDKNIVIFTHNHCMTYIAKNKRDAIFKPDYLDGLVMHVEKGKVYLDGEFVNH.

An N-terminal signal peptide occupies residues 1 to 25 (MLAFCRSSLKSKKYFIILLALAAIA).

This sequence belongs to the phosphoglycerate mutase family. Ais subfamily.

It is found in the periplasm. It functions in the pathway bacterial outer membrane biogenesis; lipopolysaccharide metabolism. Functionally, catalyzes the dephosphorylation of heptose(II) of the outer membrane lipopolysaccharide core. The polypeptide is Lipopolysaccharide core heptose(II)-phosphate phosphatase (Shigella flexneri serotype 5b (strain 8401)).